Consider the following 95-residue polypeptide: NADH-quinone oxidoreductase subunit K (95 aa).

Transmembrane regions (helical) follow at residues 1 to 21, 25 to 45, and 59 to 79; these read MSYLLASALLFALGVYGVLTR, ILVFLSIELMLNAANLSLVGF, and MVIAVAAAEVAVGLGLIVAIF.

This sequence belongs to the complex I subunit 4L family. As to quaternary structure, NDH-1 is composed of 15 different subunits. Subunits NuoA, H, J, K, L, M, N constitute the membrane sector of the complex.

Its subcellular location is the cell inner membrane. It carries out the reaction a quinone + NADH + 5 H(+)(in) = a quinol + NAD(+) + 4 H(+)(out). In terms of biological role, NDH-1 shuttles electrons from NADH, via FMN and iron-sulfur (Fe-S) centers, to quinones in the respiratory chain. The immediate electron acceptor for the enzyme in this species is believed to be a menaquinone. Couples the redox reaction to proton translocation (for every two electrons transferred, four hydrogen ions are translocated across the cytoplasmic membrane), and thus conserves the redox energy in a proton gradient. The chain is NADH-quinone oxidoreductase subunit K from Thermus thermophilus (strain ATCC BAA-163 / DSM 7039 / HB27).